The chain runs to 227 residues: Broad specificity amino-acid racemase RacX (227 aa).

Position 51–53 (51–53 (DRP)) interacts with substrate. Cys82 serves as the catalytic Proton donor/acceptor. Residues 83–85 (NTA) and Lys161 each bind substrate. Cys191 acts as the Proton donor/acceptor in catalysis.

The protein belongs to the aspartate/glutamate racemases family. In terms of assembly, homodimer.

It catalyses the reaction an L-alpha-amino acid = a D-alpha-amino acid. The catalysed reaction is (2S,6S)-2,6-diaminopimelate = meso-2,6-diaminopimelate. It carries out the reaction L-lysine = D-lysine. The enzyme catalyses L-arginine = D-arginine. It catalyses the reaction L-ornithine = D-ornithine. The catalysed reaction is L-histidine = D-histidine. It carries out the reaction L-alanine = D-alanine. The enzyme catalyses L-tyrosine = D-tyrosine. It catalyses the reaction L-phenylalanine = D-phenylalanine. The catalysed reaction is L-serine = D-serine. It carries out the reaction L-glutamine = D-glutamine. The enzyme catalyses L-methionine = D-methionine. It catalyses the reaction L-asparagine = D-asparagine. The catalysed reaction is L-homoserine = D-homoserine. Its function is as follows. Amino-acid racemase able to utilize a broad range of substrates. Preferentially catalyzes the epimerization of LL-diaminopimelate, as well as the racemization of D-lysine, L-arginine, L-ornithine, L-lysine and D-arginine. Has lower activity against D-ornithine, L-histidine, L-alanine, L-tyrosine, L-phenylalanine, L-serine, L-glutamine, L-methionine, L-asparagine and L-homoserine. Has weak activity against L-norleucine, L-aminobutyric acid and L-norvaline. Has no activity toward nine L-amino acids (Thr, Glu, Asp, Val, Leu, Ile, Trp, Cit and Aad). D-amino acids might be used as components of peptidoglycan and/or be involved in peptidoglycan metabolism and remodeling. The sequence is that of Broad specificity amino-acid racemase RacX (racX) from Bacillus subtilis (strain 168).